Reading from the N-terminus, the 343-residue chain is Probable fructokinase-7 (343 aa).

Glycine 2 carries the post-translational modification N-acetylglycine.

The protein belongs to the carbohydrate kinase PfkB family.

The catalysed reaction is D-fructose + ATP = D-fructose 6-phosphate + ADP + H(+). It functions in the pathway glycan biosynthesis; starch biosynthesis. Functionally, may play an important role in maintaining the flux of carbon towards starch formation. The chain is Probable fructokinase-7 from Arabidopsis thaliana (Mouse-ear cress).